The following is a 209-amino-acid chain: LexA repressor (209 aa).

Residues 30–50 (RVEIAREIGFKSPNAAEEHLK) constitute a DNA-binding region (H-T-H motif). Catalysis depends on for autocatalytic cleavage activity residues Ser-126 and Lys-163.

Belongs to the peptidase S24 family. Homodimer.

It catalyses the reaction Hydrolysis of Ala-|-Gly bond in repressor LexA.. Functionally, represses a number of genes involved in the response to DNA damage (SOS response), including recA and lexA. In the presence of single-stranded DNA, RecA interacts with LexA causing an autocatalytic cleavage which disrupts the DNA-binding part of LexA, leading to derepression of the SOS regulon and eventually DNA repair. The sequence is that of LexA repressor from Glaesserella parasuis serovar 5 (strain SH0165) (Haemophilus parasuis).